Here is a 447-residue protein sequence, read N- to C-terminus: MSMTPREIVHELNRHIIGQDDAKRAVAIALRNRWRRMQLPAELRAEVTPKNILMIGPTGVGKTEIARRLAKLANAPFLKVEATKFTEVGYVGRDVESIIRDLADAALKMLREQEIIRVRHRAEDAAEDRILDALLPQARVTSFSEEAAQTSSDSNTRQLFRKRLREGQLDDKEIEIEVADAVGVEIAAPPGMEEMTNQLQSLFANMGKGKRKARKLKVKEALKMVRDEEASRLVNEEELKAKALEAVEQHGIVFIDEIDKVAKRGNVGGADVSREGVQRDLLPLIEGCTVNTKLGMVKTDHILFIASGAFHLSKPSDLVPELQGRLPIRVELKALTPEDFERILQEPHASLTEQYQALLKTEGLNIEFLADGIKRLAEIAYQVNEKTENIGARRLHTLLERLLEEVSFSAGDLASTHDEAPIQIDAAYVNSHLGELAQNEDLSRYIL.

ATP-binding positions include I17, 59-64 (GVGKTE), D256, E321, and R393.

Belongs to the ClpX chaperone family. HslU subfamily. As to quaternary structure, a double ring-shaped homohexamer of HslV is capped on each side by a ring-shaped HslU homohexamer. The assembly of the HslU/HslV complex is dependent on binding of ATP.

It is found in the cytoplasm. ATPase subunit of a proteasome-like degradation complex; this subunit has chaperone activity. The binding of ATP and its subsequent hydrolysis by HslU are essential for unfolding of protein substrates subsequently hydrolyzed by HslV. HslU recognizes the N-terminal part of its protein substrates and unfolds these before they are guided to HslV for hydrolysis. The chain is ATP-dependent protease ATPase subunit HslU from Pseudomonas putida (strain ATCC 47054 / DSM 6125 / CFBP 8728 / NCIMB 11950 / KT2440).